Consider the following 274-residue polypeptide: 2,3,4,5-tetrahydropyridine-2,6-dicarboxylate N-succinyltransferase (274 aa).

This sequence belongs to the transferase hexapeptide repeat family.

It is found in the cytoplasm. It carries out the reaction (S)-2,3,4,5-tetrahydrodipicolinate + succinyl-CoA + H2O = (S)-2-succinylamino-6-oxoheptanedioate + CoA. The protein operates within amino-acid biosynthesis; L-lysine biosynthesis via DAP pathway; LL-2,6-diaminopimelate from (S)-tetrahydrodipicolinate (succinylase route): step 1/3. The protein is 2,3,4,5-tetrahydropyridine-2,6-dicarboxylate N-succinyltransferase of Alteromonas mediterranea (strain DSM 17117 / CIP 110805 / LMG 28347 / Deep ecotype).